Consider the following 573-residue polypeptide: Poly(ribitol-phosphate) beta-N-acetylglucosaminyltransferase TarS (573 aa).

UDP-N-acetyl-alpha-D-glucosamine contacts are provided by residues proline 9, aspartate 41, asparagine 68, arginine 76, 92 to 94 (DSD), arginine 127, and glutamate 178. Mn(2+) is bound at residue aspartate 94. The active-site Proton acceptor is the aspartate 179. Residues arginine 207 and 211-213 (HMS) contribute to the UDP-N-acetyl-alpha-D-glucosamine site.

The protein belongs to the glycosyltransferase 2 family. Homotrimer. Mn(2+) is required as a cofactor.

The enzyme catalyses 4-O-[(D-ribitylphospho)(n)-di{(2R)-glycerylphospho}]-N-acetyl-beta-D-mannosaminyl-(1-&gt;4)-N-acetyl-alpha-D-glucosaminyl di-trans,octa-cis-undecaprenyl diphosphate + n UDP-N-acetyl-alpha-D-glucosamine = 4-O-([2-N-acetyl-beta-D-glucosaminyl-1-D-ribitylphospho](n)-di{[2R]-1-glycerylphospho})-N-acetyl-beta-D-mannosaminyl-(1-&gt;4)-N-acetyl-alpha-D-glucosaminyl di-trans,octa-cis-undecaprenyl diphosphate + n UDP + n H(+). The protein operates within cell wall biogenesis; poly(ribitol phosphate) teichoic acid biosynthesis. Functionally, attaches beta-O-GlcNAc (beta-O-N-acetyl-D-glucosamine) residues to the C4 position of poly(RboP)-wall teichoic acids (WTAs). Mediates beta-lactam resistance in methicillin resistant Staphylococcus aureus (MRSA) strains. This is Poly(ribitol-phosphate) beta-N-acetylglucosaminyltransferase TarS from Staphylococcus aureus (strain Mu50 / ATCC 700699).